The primary structure comprises 282 residues: 4-hydroxy-tetrahydrodipicolinate reductase (282 aa).

Residue glycine 12–methionine 17 coordinates NAD(+). Residue arginine 44 participates in NADP(+) binding. NAD(+) contacts are provided by residues glycine 107–threonine 109 and serine 131–phenylalanine 134. The active-site Proton donor/acceptor is the histidine 164. A (S)-2,3,4,5-tetrahydrodipicolinate-binding site is contributed by histidine 165. The active-site Proton donor is the lysine 168. Glycine 174–threonine 175 serves as a coordination point for (S)-2,3,4,5-tetrahydrodipicolinate.

It belongs to the DapB family. As to quaternary structure, homotetramer.

The protein resides in the cytoplasm. It carries out the reaction (S)-2,3,4,5-tetrahydrodipicolinate + NAD(+) + H2O = (2S,4S)-4-hydroxy-2,3,4,5-tetrahydrodipicolinate + NADH + H(+). It catalyses the reaction (S)-2,3,4,5-tetrahydrodipicolinate + NADP(+) + H2O = (2S,4S)-4-hydroxy-2,3,4,5-tetrahydrodipicolinate + NADPH + H(+). Its pathway is amino-acid biosynthesis; L-lysine biosynthesis via DAP pathway; (S)-tetrahydrodipicolinate from L-aspartate: step 4/4. In terms of biological role, catalyzes the conversion of 4-hydroxy-tetrahydrodipicolinate (HTPA) to tetrahydrodipicolinate. The protein is 4-hydroxy-tetrahydrodipicolinate reductase of Blochmanniella pennsylvanica (strain BPEN).